A 620-amino-acid polypeptide reads, in one-letter code: Chaperone protein HscA homolog (620 aa).

This sequence belongs to the heat shock protein 70 family.

Functionally, chaperone involved in the maturation of iron-sulfur cluster-containing proteins. Has a low intrinsic ATPase activity which is markedly stimulated by HscB. The chain is Chaperone protein HscA homolog from Bordetella petrii (strain ATCC BAA-461 / DSM 12804 / CCUG 43448).